The following is a 128-amino-acid chain: Fluoride-specific ion channel FluC (128 aa).

The next 4 helical transmembrane spans lie at 4–24, 35–55, 67–87, and 99–119; these read VFLLIIGGAIGSALRFGVSTW, FGILSVNVIGSFLIGFCWSIA, FLFTGLFGGFTTFSSFALDTM, and LLNVLASNILGLIAVFLGIIL. Na(+) contacts are provided by glycine 74 and threonine 77.

This sequence belongs to the fluoride channel Fluc/FEX (TC 1.A.43) family.

It is found in the cell inner membrane. The catalysed reaction is fluoride(in) = fluoride(out). Na(+) is not transported, but it plays an essential structural role and its presence is essential for fluoride channel function. In terms of biological role, fluoride-specific ion channel. Important for reducing fluoride concentration in the cell, thus reducing its toxicity. This is Fluoride-specific ion channel FluC from Parabacteroides distasonis (strain ATCC 8503 / DSM 20701 / CIP 104284 / JCM 5825 / NCTC 11152).